A 61-amino-acid polypeptide reads, in one-letter code: UPF0434 protein MS0934 (61 aa).

Belongs to the UPF0434 family.

The polypeptide is UPF0434 protein MS0934 (Mannheimia succiniciproducens (strain KCTC 0769BP / MBEL55E)).